A 629-amino-acid polypeptide reads, in one-letter code: MSVFYQYEVIVVGGGHAGTEAALAAARQGVRTLLLTHNIETLGQMSCNPAIGGIGKGHLVKEIDALGGLMAQAADQAGIHFRMLNARKGPAVRATRAQADRALYKAVVRKALEQQSCLSLFQQAVTDLVVKGERVVGVRTQLGLTFYAPAVVLTVGTFLGGRIHVGLTNHEGGRAGDPPANILSSRLRELPFRVARLKTGTPPRIDGRSIDYSQLEVQPGDDPVPVFSFLGSAEDHPQQVSCHITRTNLCTHEIIRASLDRSPIYSGEIEGIGPRYCPSIEDKVVRFSDKASHQIFIEPEGLETFEIYPNGISTSLPFDVQVALVRSIQGFEQAHITRPGYAIEYDFFDPRDLKPSLETSFLQGLYFAGQINGTTGYEEAAAQGLIAGLNAGLQVQEKEPWYPRRDEAYIGVLIDDLITCGTSEPYRMFTSRAEYRLLLREDNADLRLTPIGRELRVVDEVRWRRFNTKWKAIERENQRLVQQRIEPDKVSEGEAVTLLGEPLRREYRLIELLRRPHISYEKLMRLIGEPMAVEPAVAEQIAIQAKYAGYIERQQLEIARQQRHESLRLPLDLNYHQVRGLSVEVQEKLARVQPATLGQATRIPGVTPAAISLLLVYLKRARFLEETGV.

Residue glycine 13–glycine 18 participates in FAD binding. Glycine 273–phenylalanine 287 contributes to the NAD(+) binding site.

The protein belongs to the MnmG family. As to quaternary structure, homodimer. Heterotetramer of two MnmE and two MnmG subunits. FAD serves as cofactor.

It is found in the cytoplasm. Its function is as follows. NAD-binding protein involved in the addition of a carboxymethylaminomethyl (cmnm) group at the wobble position (U34) of certain tRNAs, forming tRNA-cmnm(5)s(2)U34. The sequence is that of tRNA uridine 5-carboxymethylaminomethyl modification enzyme MnmG from Nitrosococcus oceani (strain ATCC 19707 / BCRC 17464 / JCM 30415 / NCIMB 11848 / C-107).